The primary structure comprises 80 residues: Conotoxin Lt6.2 (80 aa).

The first 24 residues, 1 to 24 (MKLTRVLIIAVLFLTAYQLTTVET), serve as a signal peptide directing secretion. Positions 25–47 (YSRGKWMHRALRSTGKNPKVTRE) are excised as a propeptide. Intrachain disulfides connect C48/C62, C55/C66, and C61/C73.

Belongs to the conotoxin O1 superfamily. In terms of tissue distribution, expressed by the venom duct.

The protein localises to the secreted. The protein is Conotoxin Lt6.2 of Conus litteratus (Lettered cone).